We begin with the raw amino-acid sequence, 152 residues long: Small ribosomal subunit protein uS13 (152 aa).

The protein belongs to the universal ribosomal protein uS13 family. In terms of assembly, component of the small ribosomal subunit.

The protein localises to the cytoplasm. Its function is as follows. Component of the small ribosomal subunit. The ribosome is a large ribonucleoprotein complex responsible for the synthesis of proteins in the cell. Plays an essential role in early embryonic development. This chain is Small ribosomal subunit protein uS13 (rps18), found in Danio rerio (Zebrafish).